The chain runs to 461 residues: Argininosuccinate lyase (461 aa).

This sequence belongs to the lyase 1 family. Argininosuccinate lyase subfamily.

Its subcellular location is the cytoplasm. The enzyme catalyses 2-(N(omega)-L-arginino)succinate = fumarate + L-arginine. Its pathway is amino-acid biosynthesis; L-arginine biosynthesis; L-arginine from L-ornithine and carbamoyl phosphate: step 3/3. The polypeptide is Argininosuccinate lyase (Streptococcus gordonii (strain Challis / ATCC 35105 / BCRC 15272 / CH1 / DL1 / V288)).